Reading from the N-terminus, the 128-residue chain is MNIRNTLVLLVSTVLVLMSCSIGCYAGSPNCVGAPSGQVYIFSSWDFQGDRYVYNISQGQTTLPDSFIHNVQSFTSGSEICFASCNPLETYQISAGQSHRNYAALENFGQRMNLIIPGNCSNLVCPSN.

Residues 1–26 (MNIRNTLVLLVSTVLVLMSCSIGCYA) form the signal peptide. N-linked (GlcNAc...) asparagine glycosylation is found at N55 and N119.

Belongs to the Dictyostelium gerABC family.

The protein resides in the secreted. The sequence is that of Spore germination protein 1/2/3-related protein from Dictyostelium discoideum (Social amoeba).